Consider the following 276-residue polypeptide: Dermonecrotic toxin LsaSicTox-alphaIB2iii (276 aa).

Residue histidine 5 is part of the active site. Mg(2+) is bound by residues glutamate 25 and aspartate 27. Histidine 41 (nucleophile) is an active-site residue. 2 cysteine pairs are disulfide-bonded: cysteine 45-cysteine 51 and cysteine 47-cysteine 190. Mg(2+) is bound at residue aspartate 85. Asparagine 129 and asparagine 253 each carry an N-linked (GlcNAc...) asparagine glycan.

It belongs to the arthropod phospholipase D family. Class II subfamily. Requires Mg(2+) as cofactor. As to expression, expressed by the venom gland.

It localises to the secreted. It catalyses the reaction an N-(acyl)-sphingosylphosphocholine = an N-(acyl)-sphingosyl-1,3-cyclic phosphate + choline. The enzyme catalyses an N-(acyl)-sphingosylphosphoethanolamine = an N-(acyl)-sphingosyl-1,3-cyclic phosphate + ethanolamine. The catalysed reaction is a 1-acyl-sn-glycero-3-phosphocholine = a 1-acyl-sn-glycero-2,3-cyclic phosphate + choline. It carries out the reaction a 1-acyl-sn-glycero-3-phosphoethanolamine = a 1-acyl-sn-glycero-2,3-cyclic phosphate + ethanolamine. In terms of biological role, dermonecrotic toxins cleave the phosphodiester linkage between the phosphate and headgroup of certain phospholipids (sphingolipid and lysolipid substrates), forming an alcohol (often choline) and a cyclic phosphate. This toxin acts on sphingomyelin (SM). It may also act on ceramide phosphoethanolamine (CPE), lysophosphatidylcholine (LPC) and lysophosphatidylethanolamine (LPE), but not on lysophosphatidylserine (LPS), and lysophosphatidylglycerol (LPG). It acts by transphosphatidylation, releasing exclusively cyclic phosphate products as second products. Induces dermonecrosis, hemolysis, increased vascular permeability, edema, inflammatory response, and platelet aggregation. The chain is Dermonecrotic toxin LsaSicTox-alphaIB2iii from Loxosceles sabina (Tucson recluse spider).